The primary structure comprises 273 residues: HMP-PP phosphatase (273 aa).

The Nucleophile role is filled by Asp-8. Mg(2+) contacts are provided by Asp-8, Asp-10, and Asp-212.

Belongs to the HAD-like hydrolase superfamily. Cof family. Requires Mg(2+) as cofactor.

The catalysed reaction is 4-amino-2-methyl-5-(diphosphooxymethyl)pyrimidine + H2O = 4-amino-2-methyl-5-(phosphooxymethyl)pyrimidine + phosphate + H(+). In terms of biological role, catalyzes the hydrolysis of 4-amino-2-methyl-5-hydroxymethylpyrimidine pyrophosphate (HMP-PP) to 4-amino-2-methyl-5-hydroxymethylpyrimidine phosphate (HMP-P). The polypeptide is HMP-PP phosphatase (Yersinia enterocolitica serotype O:8 / biotype 1B (strain NCTC 13174 / 8081)).